We begin with the raw amino-acid sequence, 708 residues long: Meiotic sister-chromatid recombination protein 6, mitochondrial (708 aa).

The transit peptide at 1–15 (MLSVRISARQCSVRG) directs the protein to the mitochondrion. The segment covering 19–36 (QANNVSQPAKDNATNGSD) has biased composition (polar residues). The disordered stretch occupies residues 19–44 (QANNVSQPAKDNATNGSDAATEKKGT).

The protein localises to the mitochondrion. In terms of biological role, may be involved in the control of meiotic sister-chromatid recombination. In Kluyveromyces lactis (strain ATCC 8585 / CBS 2359 / DSM 70799 / NBRC 1267 / NRRL Y-1140 / WM37) (Yeast), this protein is Meiotic sister-chromatid recombination protein 6, mitochondrial (MSC6).